A 2475-amino-acid chain; its full sequence is Gellan lyase (2475 aa).

The N-terminal stretch at 1 to 35 (MRFSWKKLVSAALVMALLVGIVYPAASGRGAVASA) is a signal peptide. In terms of domain architecture, Fibronectin type-III spans 623–708 (APANVQVAIS…QPATATSPGE (86 aa)). One can recognise a NodB homology domain in the interval 1295–1518 (GAFSLTIDDN…RDQIWVGRYG (224 aa)). Residues 2111 to 2223 (QPGQQLELTV…VSTAVSLSDF (113 aa)) form the Cohesin domain.

Subject to proteolytic processing after secretion. Cleavage occurs between Gly-1205 and Leu-1206. This gives rise to a N-terminal gellan lyase of 130 kDa being the mature form of the gellan lyase. The function of C-terminal gellan lyase is not known.

The protein resides in the secreted. It catalyses the reaction Eliminative cleavage of beta-D-glucopyranosyl-(1-&gt;4)-beta-D-glucopyranosyluronate bonds of gellan backbone releasing tetrasaccharides containing a 4-deoxy-4,5-unsaturated D-glucopyranosyluronic acid at the non-reducing end. The tetrasaccharide produced from deacetylated gellan is beta-D-4-deoxy-Delta(4)-GlcAp-(1-&gt;4)-beta-D-Glcp-(1-&gt;4)-alpha-L-Rhap-(1-&gt;3)-beta-D-Glcp.. Functionally, cleaves the glycosidic bonds of gellan backbone and releases tetrasaccharide units of glucuronyl-glucosyl-rhamnosyl-glucose with unsaturated glucuronic acid at the non-reducing terminal. The enzyme is highly specific to the heteropolysaccharide gellan, especially deacetylated gellan. The protein is Gellan lyase of Bacillus sp.